The following is a 159-amino-acid chain: Ribosomal RNA large subunit methyltransferase H (159 aa).

Residues Leu76 and Gly108 each contribute to the S-adenosyl-L-methionine site.

Belongs to the RNA methyltransferase RlmH family. In terms of assembly, homodimer.

It is found in the cytoplasm. The catalysed reaction is pseudouridine(1915) in 23S rRNA + S-adenosyl-L-methionine = N(3)-methylpseudouridine(1915) in 23S rRNA + S-adenosyl-L-homocysteine + H(+). Functionally, specifically methylates the pseudouridine at position 1915 (m3Psi1915) in 23S rRNA. The polypeptide is Ribosomal RNA large subunit methyltransferase H (Ligilactobacillus salivarius (strain UCC118) (Lactobacillus salivarius)).